The sequence spans 603 residues: Adenine deaminase (603 aa).

The protein belongs to the metallo-dependent hydrolases superfamily. Adenine deaminase family. It depends on Mn(2+) as a cofactor.

The enzyme catalyses adenine + H2O + H(+) = hypoxanthine + NH4(+). This chain is Adenine deaminase, found in Ruegeria pomeroyi (strain ATCC 700808 / DSM 15171 / DSS-3) (Silicibacter pomeroyi).